Consider the following 164-residue polypeptide: Small ribosomal subunit protein uS9 (164 aa).

Belongs to the universal ribosomal protein uS9 family.

The sequence is that of Small ribosomal subunit protein uS9 from Rickettsia bellii (strain OSU 85-389).